Here is a 323-residue protein sequence, read N- to C-terminus: Beta-ketoacyl-[acyl-carrier-protein] synthase III (323 aa).

Catalysis depends on residues C113 and H250. The tract at residues 251–255 (QANRR) is ACP-binding. N280 is an active-site residue.

It belongs to the thiolase-like superfamily. FabH family. Homodimer.

Its subcellular location is the cytoplasm. It catalyses the reaction malonyl-[ACP] + acetyl-CoA + H(+) = 3-oxobutanoyl-[ACP] + CO2 + CoA. It functions in the pathway lipid metabolism; fatty acid biosynthesis. In terms of biological role, catalyzes the condensation reaction of fatty acid synthesis by the addition to an acyl acceptor of two carbons from malonyl-ACP. Catalyzes the first condensation reaction which initiates fatty acid synthesis and may therefore play a role in governing the total rate of fatty acid production. Possesses both acetoacetyl-ACP synthase and acetyl transacylase activities. Its substrate specificity determines the biosynthesis of branched-chain and/or straight-chain of fatty acids. This chain is Beta-ketoacyl-[acyl-carrier-protein] synthase III, found in Sinorhizobium medicae (strain WSM419) (Ensifer medicae).